The following is a 321-amino-acid chain: Lipoyl synthase (321 aa).

The [4Fe-4S] cluster site is built by cysteine 68, cysteine 73, cysteine 79, cysteine 94, cysteine 98, cysteine 101, and serine 308. A Radical SAM core domain is found at 80-297; sequence FNHGTATFMI…KEEALAMGFT (218 aa).

Belongs to the radical SAM superfamily. Lipoyl synthase family. It depends on [4Fe-4S] cluster as a cofactor.

The protein resides in the cytoplasm. The enzyme catalyses [[Fe-S] cluster scaffold protein carrying a second [4Fe-4S](2+) cluster] + N(6)-octanoyl-L-lysyl-[protein] + 2 oxidized [2Fe-2S]-[ferredoxin] + 2 S-adenosyl-L-methionine + 4 H(+) = [[Fe-S] cluster scaffold protein] + N(6)-[(R)-dihydrolipoyl]-L-lysyl-[protein] + 4 Fe(3+) + 2 hydrogen sulfide + 2 5'-deoxyadenosine + 2 L-methionine + 2 reduced [2Fe-2S]-[ferredoxin]. The protein operates within protein modification; protein lipoylation via endogenous pathway; protein N(6)-(lipoyl)lysine from octanoyl-[acyl-carrier-protein]: step 2/2. Catalyzes the radical-mediated insertion of two sulfur atoms into the C-6 and C-8 positions of the octanoyl moiety bound to the lipoyl domains of lipoate-dependent enzymes, thereby converting the octanoylated domains into lipoylated derivatives. This is Lipoyl synthase from Photorhabdus laumondii subsp. laumondii (strain DSM 15139 / CIP 105565 / TT01) (Photorhabdus luminescens subsp. laumondii).